The following is a 285-amino-acid chain: Hydrolase in pqqF 5'region (285 aa).

The CN hydrolase domain maps to 22–258 (MRVALYQCPP…EALIIGTLDR (237 aa)). Glu-60 serves as the catalytic Proton acceptor. The active-site Proton donor is Lys-131. Cys-165 acts as the Nucleophile in catalysis.

Belongs to the carbon-nitrogen hydrolase superfamily. NIT1/NIT2 family.

The sequence is that of Hydrolase in pqqF 5'region from Pseudomonas protegens (strain DSM 19095 / LMG 27888 / CFBP 6595 / CHA0).